Reading from the N-terminus, the 231-residue chain is DNA repair protein RecO (231 aa).

This sequence belongs to the RecO family.

In terms of biological role, involved in DNA repair and RecF pathway recombination. The protein is DNA repair protein RecO of Coxiella burnetii (strain CbuK_Q154) (Coxiella burnetii (strain Q154)).